We begin with the raw amino-acid sequence, 413 residues long: Prophage integrase IntA (413 aa).

The 82-residue stretch at 105–186 (NTFLLVAERW…RINEVMIYAQ (82 aa)) folds into the Core-binding (CB) domain. Residues 209-386 (KNMPSIRPDQ…DYLEQRRPMM (178 aa)) form the Tyr recombinase domain. Residues arginine 248, lysine 275, histidine 337, arginine 340, and histidine 363 contribute to the active site. Catalysis depends on tyrosine 373, which acts as the O-(3'-phospho-DNA)-tyrosine intermediate.

It belongs to the 'phage' integrase family.

Its function is as follows. Integrase is necessary for integration of the phage into the host genome by site-specific recombination. In conjunction with excisionase, integrase is also necessary for excision of the prophage from the host genome. Part of the cryptic P4-like prophage CP4-57, it excises the prophage when overexpressed, which also requires integration host factor (encoded by ihfA and ihfB). Overexpression of AlpA leads to excision of the CP4-57 prophage, which inactivates ssrA (the gene upstream of the prophage) that encodes tmRNA which is required to rescue stalled ribosomes in a process known as trans-translation. The sequence is that of Prophage integrase IntA (intA) from Escherichia coli (strain K12).